Consider the following 236-residue polypeptide: MAPLLLLFLLGGLCALFSLASSSPATKKCGDAKKRREEEGEEVVVVAKKRPEEEPRRPDPDADLGIVFSTFDHDGDGFITAAELEESLKRLGIAVSSAAEAAALVARVDANSDGLIDIHEFRELYDSIPKRRKSHQQHPLPSTAAADEEAAAADEEYEAEEEERDLREAFDVFDGNKDGLISAEELGTVLESLGLRQHGGRPAVAECRDMIRLVDSDGDGMVSFEEFKRMMTVVKA.

A disordered region spans residues 43 to 64 (VVVVAKKRPEEEPRRPDPDADL). Residues 49-60 (KRPEEEPRRPDP) are compositionally biased toward basic and acidic residues. EF-hand domains are found at residues 59–94 (DPDADLGIVFSTFDHDGDGFITAAELEESLKRLGIA) and 96–131 (SSAAEAAALVARVDANSDGLIDIHEFRELYDSIPKR). Residues aspartate 72, aspartate 74, aspartate 76, glutamate 83, aspartate 109, asparagine 111, aspartate 113, and glutamate 120 each contribute to the Ca(2+) site. Residues 130–158 (KRRKSHQQHPLPSTAAADEEAAAADEEYE) are disordered. Over residues 146-158 (ADEEAAAADEEYE) the composition is skewed to acidic residues. 2 consecutive EF-hand domains span residues 161 to 196 (EEERDLREAFDVFDGNKDGLISAEELGTVLESLGLR) and 202 to 236 (PAVAECRDMIRLVDSDGDGMVSFEEFKRMMTVVKA). Residues aspartate 174, asparagine 176, aspartate 178, glutamate 185, aspartate 215, aspartate 217, aspartate 219, methionine 221, and glutamate 226 each contribute to the Ca(2+) site.

Potential calcium sensor. This Oryza sativa subsp. japonica (Rice) protein is Probable calcium-binding protein CML30 (CML30).